Reading from the N-terminus, the 990-residue chain is Aminopeptidase Q (990 aa).

At 2–13 (GPPSSSGFYVSR) the chain is on the cytoplasmic side. A helical; Signal-anchor for type II membrane protein transmembrane segment spans residues 14–34 (AVALLLAGLVAALLLALAVLA). The Lumenal portion of the chain corresponds to 35 to 990 (ALYGHCERVP…RIAAWLRRNT (956 aa)). Residues 48-91 (LPGLRDLEAESSPPLRQKPTPTPKPSSARELAVTTTPSNWRPPG) form a disordered region. 2 N-linked (GlcNAc...) asparagine glycosylation sites follow: N132 and N168. E240 is a substrate binding site. Residues N261, N288, N319, and N346 are each glycosylated (N-linked (GlcNAc...) asparagine). 379-383 (HAMEN) is a binding site for substrate. H415 contributes to the Zn(2+) binding site. E416 (proton acceptor) is an active-site residue. H419 and E438 together coordinate Zn(2+). The active-site Proton donor is the Y503. N-linked (GlcNAc...) asparagine glycosylation is found at N607 and N653.

It belongs to the peptidase M1 family. In terms of assembly, homodimer. The cofactor is Zn(2+). N-glycosylated. Specifically expressed in placenta and not in other tissues. Mainly found at the cell surface region of the extravillous trophoblasts. Detected on extravillous trophoblasts in the outer layer of the chorion laeve in the fetal membrane Not detected on either fetal amnionic epithelial cells or maternal decidual cells. Also detected in the migrating extravillous trophoblasts in the maternal decidual tissues (at protein level).

The protein localises to the membrane. Inhibited by bestatin. Metalloprotease which may be important for placentation by regulating biological activity of key peptides at the embryo-maternal interface. On synthetic substrates it shows a marked preference for Leu-4-methylcoumaryl-7-amide (Leu-MCA) over Met-MCA, Arg-LCA and Lys-LCA. Cleaves the N-terminal amino acid of several peptides such as angiotensin-3, kisspeptin-10 and endokinin C. This Homo sapiens (Human) protein is Aminopeptidase Q.